Here is a 224-residue protein sequence, read N- to C-terminus: Probable mitochondrial import inner membrane translocase subunit Tim17 4 (224 aa).

The next 3 membrane-spanning stretches (helical) occupy residues 16 to 36, 60 to 80, and 115 to 135; these read CGCA…LKGF, AIAG…CVMV, and AFVG…VATI.

The protein belongs to the Tim17/Tim22/Tim23 family. Component of the TIM23 complex at least composed of Tim23, Tim17 (Tim17a1, Tim17a2 or Tim17b1) and a Tim50. The complex interacts with the Tim44 component of the PAM complex.

The protein resides in the mitochondrion inner membrane. Functionally, essential component of the TIM23 complex, a complex that mediates the translocation of transit peptide-containing proteins across the mitochondrial inner membrane. The protein is Probable mitochondrial import inner membrane translocase subunit Tim17 4 (Tim17a2) of Drosophila melanogaster (Fruit fly).